Consider the following 102-residue polypeptide: Large ribosomal subunit protein bL21 (102 aa).

Belongs to the bacterial ribosomal protein bL21 family. Part of the 50S ribosomal subunit. Contacts protein L20.

Its function is as follows. This protein binds to 23S rRNA in the presence of protein L20. The sequence is that of Large ribosomal subunit protein bL21 from Solidesulfovibrio magneticus (strain ATCC 700980 / DSM 13731 / RS-1) (Desulfovibrio magneticus).